Reading from the N-terminus, the 318-residue chain is Beta-ketoacyl-[acyl-carrier-protein] synthase III (318 aa).

Residues C113 and H245 contribute to the active site. Residues 246–250 (QANIR) are ACP-binding. N275 is an active-site residue.

It belongs to the thiolase-like superfamily. FabH family. Homodimer.

It is found in the cytoplasm. It catalyses the reaction malonyl-[ACP] + acetyl-CoA + H(+) = 3-oxobutanoyl-[ACP] + CO2 + CoA. Its pathway is lipid metabolism; fatty acid biosynthesis. Its function is as follows. Catalyzes the condensation reaction of fatty acid synthesis by the addition to an acyl acceptor of two carbons from malonyl-ACP. Catalyzes the first condensation reaction which initiates fatty acid synthesis and may therefore play a role in governing the total rate of fatty acid production. Possesses both acetoacetyl-ACP synthase and acetyl transacylase activities. Its substrate specificity determines the biosynthesis of branched-chain and/or straight-chain of fatty acids. The protein is Beta-ketoacyl-[acyl-carrier-protein] synthase III of Wolbachia pipientis subsp. Culex pipiens (strain wPip).